The sequence spans 605 residues: Adaptin medium chain homolog APM2 (605 aa).

Residues 150–196 (EEWSPGEESSSSSGSDSDSEYSNTNKRKDKKKKRKKKKGTKGKSVGK) are disordered. Low complexity predominate over residues 155 to 171 (GEESSSSSGSDSDSEYS). Positions 174–196 (NKRKDKKKKRKKKKGTKGKSVGK) are enriched in basic residues. The MHD domain occupies 269-604 (KNEFFLDVIE…TVSDEEYAYI (336 aa)).

The protein belongs to the adaptor complexes medium subunit family. In terms of assembly, component of the AP-1R complex composed of at least APM2, APL4 and APS1. Interacts with MIL1. Interacts with APL2.

The protein resides in the golgi apparatus membrane. Its subcellular location is the early endosome membrane. The protein localises to the cytoplasmic vesicle. It is found in the clathrin-coated vesicle membrane. Component of the AP-1-related (AP-1R) complex, an adapter protein complex that mediates of cargo protein sorting in clathrin-coated vesicles. AP-1R has a specific role in SNARE SNC1 sorting. In contrast to the APM1-containing AP-1 complex, AP-1R is incapable of sorting CHS3. The protein is Adaptin medium chain homolog APM2 (APM2) of Saccharomyces cerevisiae (strain ATCC 204508 / S288c) (Baker's yeast).